We begin with the raw amino-acid sequence, 637 residues long: Extracellular metalloproteinase 10 (637 aa).

The N-terminal stretch at 1-19 is a signal peptide; the sequence is MHGLLLAATLLSLPFNAVA. The propeptide occupies 20–245; it reads HVPPTTGLVR…VHNVVDYVAH (226 aa). Asn-282 carries N-linked (GlcNAc...) asparagine glycosylation. His-429 contributes to the Zn(2+) binding site. Residue Glu-430 is part of the active site. His-433 provides a ligand contact to Zn(2+). Asn-502 carries N-linked (GlcNAc...) asparagine glycosylation.

The protein belongs to the peptidase M36 family. Zn(2+) serves as cofactor.

Its subcellular location is the secreted. In terms of biological role, secreted metalloproteinase that allows assimilation of proteinaceous substrates. The chain is Extracellular metalloproteinase 10 (MEP10) from Uncinocarpus reesii (strain UAMH 1704).